Here is an 827-residue protein sequence, read N- to C-terminus: 6-phosphofructo-2-kinase 1 (827 aa).

Disordered stretches follow at residues 1–97 (MFKP…ENSA) and 149–175 (TRHH…DGLI). A compositionally biased stretch (low complexity) spans 31–41 (SQDSSYDLLSR). Over residues 42–59 (SSDDKIDAEKGPHDELSK) the composition is skewed to basic and acidic residues. A compositionally biased stretch (polar residues) spans 72–97 (TPISSNWNSPGITEENTPSDSPENSA). Serine 92 carries the post-translational modification Phosphoserine. At threonine 157 the chain carries Phosphothreonine. An ATP-binding site is contributed by 190-197 (GLPATGKS). Catalysis depends on residues aspartate 277 and cysteine 309. A beta-D-fructose 6-phosphate-binding site is contributed by arginine 343. The Phosphoserine intermediate role is filled by serine 404. Residue glutamate 497 is part of the active site. Catalysis depends on histidine 565, which acts as the Proton donor. Residues serine 644, serine 652, serine 659, and serine 667 each carry the phosphoserine modification. 2 disordered regions span residues 649 to 704 (APPS…SNFN) and 799 to 827 (HGKD…QSHV). Low complexity predominate over residues 671–682 (SASSSQSELSEQ). The segment covering 683–704 (PKNSVSAQTGSNNTTLIGSNFN) has biased composition (polar residues).

It catalyses the reaction beta-D-fructose 6-phosphate + ATP = beta-D-fructose 2,6-bisphosphate + ADP + H(+). Phosphorylation results in the activation of the kinase activity. In terms of biological role, synthesis of fructose 2,6-bisphosphate. This chain is 6-phosphofructo-2-kinase 1 (PFK26), found in Saccharomyces cerevisiae (strain ATCC 204508 / S288c) (Baker's yeast).